We begin with the raw amino-acid sequence, 388 residues long: Protochlorophyllide reductase A, chloroplastic (388 aa).

A chloroplast-targeting transit peptide spans 1–74; the sequence is MALQLLPSTL…KPSGKKTLRQ (74 aa).

This sequence belongs to the short-chain dehydrogenases/reductases (SDR) family. POR subfamily.

It localises to the plastid. It is found in the chloroplast. The enzyme catalyses chlorophyllide a + NADP(+) = protochlorophyllide a + NADPH + H(+). It functions in the pathway porphyrin-containing compound metabolism; chlorophyll biosynthesis. Its function is as follows. Phototransformation of protochlorophyllide (Pchlide) to chlorophyllide (Chlide). The sequence is that of Protochlorophyllide reductase A, chloroplastic (PORA) from Triticum aestivum (Wheat).